We begin with the raw amino-acid sequence, 132 residues long: Fluoride-specific ion channel FluC (132 aa).

A run of 4 helical transmembrane segments spans residues 6–26, 41–61, 73–93, and 104–124; these read VLQLIAVGFGGALGAMARFIV, GTLVVNSLGSFAIGLIMILMI, FLIVGFLGAFTTFSTFSFETY, and AMLNIGVSVLTGLFAVWLGIW. Na(+) is bound by residues Gly80 and Thr83.

Belongs to the fluoride channel Fluc/FEX (TC 1.A.43) family.

The protein resides in the cell inner membrane. It carries out the reaction fluoride(in) = fluoride(out). Its activity is regulated as follows. Na(+) is not transported, but it plays an essential structural role and its presence is essential for fluoride channel function. Fluoride-specific ion channel. Important for reducing fluoride concentration in the cell, thus reducing its toxicity. This is Fluoride-specific ion channel FluC from Hydrogenovibrio crunogenus (strain DSM 25203 / XCL-2) (Thiomicrospira crunogena).